The following is an 85-amino-acid chain: Large ribosomal subunit protein bL27 (85 aa).

The disordered stretch occupies residues 1–24 (MAHKKAGGSSRNGRDSHSKRLGVK).

The protein belongs to the bacterial ribosomal protein bL27 family.

The polypeptide is Large ribosomal subunit protein bL27 (Nitrosomonas eutropha (strain DSM 101675 / C91 / Nm57)).